The primary structure comprises 380 residues: Cytochrome b (380 aa).

4 helical membrane-spanning segments follow: residues 34–54 (FGSLLGICLATQILTGLLLAA), 78–99 (WLIRNLHANGASFFFICIYLHI), 114–134 (WNTGVILLLTLMATAFVGYVL), and 179–199 (FFTLHFLLPFMIMGLTLIHLT). Residues His-84 and His-98 each coordinate heme b. The heme b site is built by His-183 and His-197. His-202 provides a ligand contact to a ubiquinone. The next 4 membrane-spanning stretches (helical) occupy residues 227 to 247 (LKDTLGFMFMLLPLMTLALFS), 289 to 309 (LGGVLALAASVLILFLAPLLH), 321 to 341 (LFQLLFWTLTANLLILTWVGS), and 348 to 368 (FIIIGQLASLTYFTILLILFP).

The protein belongs to the cytochrome b family. As to quaternary structure, the cytochrome bc1 complex contains 11 subunits: 3 respiratory subunits (MT-CYB, CYC1 and UQCRFS1), 2 core proteins (UQCRC1 and UQCRC2) and 6 low-molecular weight proteins (UQCRH/QCR6, UQCRB/QCR7, UQCRQ/QCR8, UQCR10/QCR9, UQCR11/QCR10 and a cleavage product of UQCRFS1). This cytochrome bc1 complex then forms a dimer. Heme b is required as a cofactor.

The protein localises to the mitochondrion inner membrane. Its function is as follows. Component of the ubiquinol-cytochrome c reductase complex (complex III or cytochrome b-c1 complex) that is part of the mitochondrial respiratory chain. The b-c1 complex mediates electron transfer from ubiquinol to cytochrome c. Contributes to the generation of a proton gradient across the mitochondrial membrane that is then used for ATP synthesis. The protein is Cytochrome b (MT-CYB) of Grus nigricollis (Black-necked crane).